We begin with the raw amino-acid sequence, 262 residues long: Aminoglycoside (3'') (9) adenylyltransferase (262 aa).

It catalyses the reaction streptomycin + ATP = 3''-O-adenylylstreptomycin + diphosphate. The enzyme catalyses spectinomycin + ATP = 9-O-adenylylspectinomycin + diphosphate. Its function is as follows. Mediates bacterial resistance to the antibiotics streptomycin and spectinomycin. In Shigella flexneri, this protein is Aminoglycoside (3'') (9) adenylyltransferase.